A 429-amino-acid polypeptide reads, in one-letter code: Glutamate-1-semialdehyde 2,1-aminomutase (429 aa).

Lys-267 carries the N6-(pyridoxal phosphate)lysine modification.

Belongs to the class-III pyridoxal-phosphate-dependent aminotransferase family. HemL subfamily. In terms of assembly, homodimer. The cofactor is pyridoxal 5'-phosphate.

Its subcellular location is the cytoplasm. It catalyses the reaction (S)-4-amino-5-oxopentanoate = 5-aminolevulinate. It functions in the pathway porphyrin-containing compound metabolism; protoporphyrin-IX biosynthesis; 5-aminolevulinate from L-glutamyl-tRNA(Glu): step 2/2. The polypeptide is Glutamate-1-semialdehyde 2,1-aminomutase (Herpetosiphon aurantiacus (strain ATCC 23779 / DSM 785 / 114-95)).